Reading from the N-terminus, the 265-residue chain is Cytochrome c oxidase subunit 3 (265 aa).

6 helical membrane-spanning segments follow: residues 16 to 36 (PWPF…ILWL), 40 to 60 (PSFL…FSWW), 83 to 103 (CVAL…WTFF), 159 to 179 (VGPF…FLVQ), 198 to 218 (VFYL…IWLM), and 241 to 261 (IWYW…VYVW).

It belongs to the cytochrome c oxidase subunit 3 family. Component of the cytochrome c oxidase (complex IV, CIV), a multisubunit enzyme composed of a catalytic core of 3 subunits and several supernumerary subunits. The complex exists as a monomer or a dimer and forms supercomplexes (SCs) in the inner mitochondrial membrane with ubiquinol-cytochrome c oxidoreductase (cytochrome b-c1 complex, complex III, CIII).

The protein localises to the mitochondrion inner membrane. The catalysed reaction is 4 Fe(II)-[cytochrome c] + O2 + 8 H(+)(in) = 4 Fe(III)-[cytochrome c] + 2 H2O + 4 H(+)(out). In terms of biological role, component of the cytochrome c oxidase, the last enzyme in the mitochondrial electron transport chain which drives oxidative phosphorylation. The respiratory chain contains 3 multisubunit complexes succinate dehydrogenase (complex II, CII), ubiquinol-cytochrome c oxidoreductase (cytochrome b-c1 complex, complex III, CIII) and cytochrome c oxidase (complex IV, CIV), that cooperate to transfer electrons derived from NADH and succinate to molecular oxygen, creating an electrochemical gradient over the inner membrane that drives transmembrane transport and the ATP synthase. Cytochrome c oxidase is the component of the respiratory chain that catalyzes the reduction of oxygen to water. Electrons originating from reduced cytochrome c in the intermembrane space (IMS) are transferred via the dinuclear copper A center (CU(A)) of subunit 2 and heme A of subunit 1 to the active site in subunit 1, a binuclear center (BNC) formed by heme A3 and copper B (CU(B)). The BNC reduces molecular oxygen to 2 water molecules using 4 electrons from cytochrome c in the IMS and 4 protons from the mitochondrial matrix. The chain is Cytochrome c oxidase subunit 3 (COIII) from Mytilus edulis (Blue mussel).